The primary structure comprises 1108 residues: MPHDGKQRSQRIPRSVAAVAGIAGLLLCLAVPLLPVRQTTATVLWPQGTVDGHVSQITAPLVSGAPRALDISIPCPAVATLPADGGLVVSTLPPGGMDAGKNGLFVRANKDVVVVAFRDTVAAVAQRPAVAAGACSVLHAWADAGAAGAEFVGIPGAAGTLPAEKKPQVGGIFTDLKVPAGPGLSARVDIDTRFITAPTVLKQIVMVLGTLAVLTAIVALAVLDRRSRGGGTLINWRSPIAWLSRYRPGTHLANWRRVGLATWIADAAVLATLLLWHVVGATSSDDGYNLTIARVAPKAGYLVDYYRYFGTTDAPFDWYLGLLSRLASVSTAGVWMRLPATLAGIGCWLIISHWVLRRLGPGRGGLAANRVAVFTAGAVFVAAWLPFNNGLRPEPLIALGVLVTWMLVERAIALQRLAPAAVAVVVALLTATLAPQGLIAVAALLTGARAVAQAIRRRRASDGLLAPLAVLAAALSLILVVVFRSQTVATVLESARIKYKVGPTIAWYQDWLRYYFLTVESNPDGSMARRFAVLVMLLCLFGMLVILLRRGHVPGVASGPRWRLIGTTAVGLLLLTFTPTKWAVQFGAFAGLAGALGALTAFACSRIGLHNRRNLTLYVTALLFVLAWATSGINGWFYVGNYGVPWYDIQPVIASHPVTSMFLTLSIITGLLAAWQHFRMDYAGHTEVKDSRRNRVLASTPLLVVATIMVVGEVASLTKGAVFRYPLYTTGKANLAAIASGLSPTSCAMADDVLAEPDANAGMLQPLPGQTFGPDGPLGGVNPVGFKPDGVGDDLQSDPVVTKPGLVNSDASPNKPNVAYSDSAGTAGGKGPVGVNGSHAALPFGLDPARTPVMGSYGENSLAATATSAWYQLPPRTPDRPLVVVSAAGAIWSYKEDGTFTYGQSLKLQWGVARPDGSTVPLAEVQPIDIGPQPAWRNLRFPLAWAPPEANVARIVAYDPNLSSEQWFAFTPPRVPVTETLQQLIGSQTPVMMDIATAANFPCQRPFSEHLGVAELPAYRILPDRKQTAASSNLWQSSEAGGPFLFLQALLRTSTIPTYLRGDWYRDWGSVEQYFRLVPADQAPDAAIEQGVMTVHGWSRQGPIRALP.

13 consecutive transmembrane segments (helical) span residues 12-34 (IPRS…VPLL), 204-223 (IVMV…LAVL), 258-280 (VGLA…HVVG), 334-356 (VWMR…HWVL), 368-387 (ANRV…WLPF), 397-414 (IALG…AIAL), 421-443 (AVAV…AVAA), 463-482 (GLLA…LVVV), 531-553 (FAVL…RGHV), 582-604 (WAVQ…AFAC), 616-638 (TLYV…GWFY), 653-675 (IASH…LAAW), and 696-718 (VLAS…ASLT). Residues 804–825 (PGLVNSDASPNKPNVAYSDSAG) are disordered.

It belongs to the emb family.

It is found in the cell membrane. Arabinosyl transferase responsible for the polymerization of arabinose into the arabinan of arabinogalactan. In Mycobacterium avium, this protein is Probable arabinosyltransferase A (embA).